A 311-amino-acid chain; its full sequence is Aquaporin Lacbi1:392091 (311 aa).

Topologically, residues 1 to 16 (MHPQVASLFDNVYEDL) are cytoplasmic. A helical membrane pass occupies residues 17-37 (AAATLEFIGTAFFLLFGLGGI). Residues 38–56 (QASTAEDTASGQPPASGIE) are Extracellular-facing. The helical transmembrane segment at 57-77 (HVLYISTCMGLSLVVSAWLFF) threads the bilayer. Position 78 (Arg-78) is a topological domain, cytoplasmic. The chain crosses the membrane as a helical span at residues 79-99 (VTGGLFNPNISFALLLVGGLK). The NPA 1 motif lies at 85 to 87 (NPN). Pro-100 is a topological domain (extracellular). The chain crosses the membrane as a helical span at residues 101-121 (LRFVLFCIAQLTGAIAGAAIV). Residues 122–143 (RGLTSAPLSVNNVLQQGTSAAQ) are Cytoplasmic-facing. A helical transmembrane segment spans residues 144-164 (GVFIEMFITAALVLSVLMLAA). Residues 165–168 (EKHE) are Extracellular-facing. Residues 169 to 189 (ATPFAPVGIGLTLFACHLFAV) form a helical membrane-spanning segment. Residues 190–215 (YYTGAAMNSARAFGPAVISGFPEPQH) lie on the Cytoplasmic side of the membrane. The NPA 2 motif lies at 197–199 (NSA). The chain crosses the membrane as a helical span at residues 216–236 (WVYWVGPFLGSLLGAGFYATL). Over 237 to 311 (KHYKYWHLNP…TSSRTNFSPV (75 aa)) the chain is Extracellular. Residues 276-311 (DEETRNGCASNEEGVRATGDEKSSNATSSRTNFSPV) form a disordered region. The segment covering 288 to 298 (EGVRATGDEKS) has biased composition (basic and acidic residues). Polar residues predominate over residues 299–311 (SNATSSRTNFSPV). Residue Asn-300 is glycosylated (N-linked (GlcNAc...) asparagine).

It belongs to the MIP/aquaporin (TC 1.A.8) family.

The protein localises to the membrane. The catalysed reaction is H2O(in) = H2O(out). The enzyme catalyses NH4(+)(in) = NH4(+)(out). Water channel required to facilitate the transport of water across membranes. Also enables low but statistically significant ammonium permeability. May be involved in fungal nitrogen (ammonium) support of the plant host in symbiosis. This Laccaria bicolor (strain S238N-H82 / ATCC MYA-4686) (Bicoloured deceiver) protein is Aquaporin Lacbi1:392091.